A 782-amino-acid polypeptide reads, in one-letter code: Glucocorticoid receptor (782 aa).

The interval 1-20 is disordered; it reads MDPKESLTPPSREEIPSSVL. The tract at residues 1 to 425 is modulating; that stretch reads MDPKESLTPP…SAATGPPPKL (425 aa). Phosphothreonine is present on Thr8. Arg24 carries the omega-N-methylarginine modification. Ser46 is modified (phosphoserine). A disordered region spans residues 48-79; it reads SLAAVSQPDSKQQRLAVDFPKGSGSNAQQPDL. Residues Ser114, Ser135, Ser142, Ser208, Ser216, and Ser231 each carry the phosphoserine modification. Residues 130-184 are disordered; that stretch reads LSRSTSVPENPKSSASAAGPAAPAEKAFPKTHSDGAPEQPNVKGQTGTNGGNVKL. Residues 140–155 show a composition bias toward low complexity; that stretch reads PKSSASAAGPAAPAEK. Lys263 participates in a covalent cross-link: Glycyl lysine isopeptide (Lys-Gly) (interchain with G-Cter in SUMO2). Phosphoserine is present on Ser272. Residues Lys282 and Lys298 each participate in a glycyl lysine isopeptide (Lys-Gly) (interchain with G-Cter in SUMO); alternate cross-link. Glycyl lysine isopeptide (Lys-Gly) (interchain with G-Cter in SUMO2); alternate cross-links involve residues Lys282 and Lys298. 2 positions are modified to phosphoserine: Ser312 and Ser410. Residue Lys424 forms a Glycyl lysine isopeptide (Lys-Gly) (interchain with G-Cter in ubiquitin) linkage. 2 NR C4-type zinc fingers span residues 426 to 446 and 462 to 486; these read CLVC…CGSC and CAGR…YRKC. A DNA-binding region (nuclear receptor) is located at residues 426–491; it reads CLVCSDEASG…RYRKCLQAGM (66 aa). N6-acetyllysine is present on residues Lys485, Lys497, Lys499, and Lys500. The interaction with CLOCK stretch occupies residues 490 to 782; the sequence is GMNLEARKTK…NIKKLLFHQK (293 aa). A hinge region spans residues 492–528; the sequence is NLEARKTKKKIKGIQQATTGVSQETSENSANKTIVPA. The 235-residue stretch at 529–763 folds into the NR LBD domain; it reads TLPQLTPTLV…FPEMLAEIIT (235 aa). Residues 537-702 are interaction with CRY1; the sequence is LVSLLEVIEP…EIRMTYIKEL (166 aa). Residue Lys708 forms a Glycyl lysine isopeptide (Lys-Gly) (interchain with G-Cter in SUMO) linkage.

It belongs to the nuclear hormone receptor family. NR3 subfamily. In terms of assembly, heteromultimeric cytoplasmic complex with HSP90AA1, HSPA1A/HSPA1B, and FKBP5 or another immunophilin such as PPID, STIP1, or the immunophilin homolog PPP5C. Upon ligand binding FKBP5 dissociates from the complex and FKBP4 takes its place, thereby linking the complex to dynein and mediating transport to the nucleus, where the complex dissociates. Probably forms a complex composed of chaperones HSP90 and HSP70, co-chaperones CDC37, PPP5C, TSC1 and client protein TSC2, CDK4, AKT, RAF1 and NR3C1; this complex does not contain co-chaperones STIP1/HOP and PTGES3/p23. Directly interacts with UNC45A. Binds to DNA as a homodimer, and as heterodimer with NR3C2 or the retinoid X receptor. Binds STAT5A and STAT5B homodimers and heterodimers. Interacts with NRIP1, POU2F1, POU2F2 and TRIM28. Interacts with several coactivator complexes, including the SMARCA4 complex, CREBBP/EP300, TADA2L (Ada complex) and p160 coactivators such as NCOA2 and NCOA6. Interaction with BAG1 inhibits transactivation. Interacts with HEXIM1 and TGFB1I1. Interacts with NCOA1. Interacts with NCOA3, SMARCA4, SMARCC1, SMARCD1, and SMARCE1. Interacts with CLOCK, CRY1 and CRY2 in a ligand-dependent fashion. Interacts with CIART. Interacts with RWDD3. Interacts with UBE2I/UBC9 and this interaction is enhanced in the presence of RWDD3. Interacts with GRIP1. Interacts with NR4A3 (via nuclear receptor DNA-binding domain), represses transcription activity of NR4A3 on the POMC promoter Nur response element (NurRE). Directly interacts with PNRC2 to attract and form a complex with UPF1 and DCP1A; the interaction leads to rapid mRNA degradation. Interacts with GSK3B. Interacts with FNIP1 and FNIP2. Interacts (via C-terminus) with HNRNPU (via C-terminus). Interacts with MCM3AP. Interacts (via domain NR LBD) with HSP90AA1 and HSP90AB1. In the absence of hormonal ligand, interacts with TACC1. Interacts (via NR LBD domain) with ZNF764 (via KRAB domain); the interaction regulates transcription factor activity of NR3C1 by directing its actions toward certain biologic pathways. In terms of processing, acetylation by CLOCK reduces its binding to glucocorticoid response elements and its transcriptional activity. Increased proteasome-mediated degradation in response to glucocorticoids. Post-translationally, phosphorylated in the absence of hormone; becomes hyperphosphorylated in the presence of glucocorticoid. The Ser-208, Ser-231 and Ser-410-phosphorylated forms are mainly cytoplasmic, and the Ser-216-phosphorylated form is nuclear. Phosphorylation at Ser-216 increases transcriptional activity. Phosphorylation at Ser-208, Ser-231 and Ser-410 decreases signaling capacity. Phosphorylation at Ser-410 may protect from glucocorticoid-induced apoptosis. Phosphorylation at Ser-208 and Ser-216 is not required in regulation of chromosome segregation. May be dephosphorylated by PPP5C, attenuates NR3C1 action. In terms of processing, ubiquitinated by UBR5, leading to its degradation: UBR5 specifically recognizes and binds ligand-bound NR3C1 when it is not associated with coactivators (NCOAs). In presence of NCOAs, the UBR5-degron is not accessible, preventing its ubiquitination and degradation. Sumoylation at Lys-282 and Lys-298 negatively regulates its transcriptional activity. Sumoylation at Lys-708 positively regulates its transcriptional activity in the presence of RWDD3. Sumoylation at Lys-282 and Lys-298 is dispensable whereas sumoylation at Lys-708 is critical for the stimulatory effect of RWDD3 on its transcriptional activity. Heat shock increases sumoylation in a RWDD3-dependent manner.

It localises to the cytoplasm. The protein localises to the nucleus. It is found in the mitochondrion. The protein resides in the cytoskeleton. Its subcellular location is the spindle. It localises to the microtubule organizing center. The protein localises to the centrosome. It is found in the chromosome. The protein resides in the nucleoplasm. Receptor for glucocorticoids (GC). Has a dual mode of action: as a transcription factor that binds to glucocorticoid response elements (GRE), both for nuclear and mitochondrial DNA, and as a modulator of other transcription factors. Affects inflammatory responses, cellular proliferation and differentiation in target tissues. Involved in chromatin remodeling. Plays a role in rapid mRNA degradation by binding to the 5' UTR of target mRNAs and interacting with PNRC2 in a ligand-dependent manner which recruits the RNA helicase UPF1 and the mRNA-decapping enzyme DCP1A, leading to RNA decay. Could act as a coactivator for STAT5-dependent transcription upon growth hormone (GH) stimulation and could reveal an essential role of hepatic GR in the control of body growth. Mediates glucocorticoid-induced apoptosis. Promotes accurate chromosome segregation during mitosis. May act as a tumor suppressor. May play a negative role in adipogenesis through the regulation of lipolytic and antilipogenic gene expression. The sequence is that of Glucocorticoid receptor (NR3C1) from Sus scrofa (Pig).